Here is a 701-residue protein sequence, read N- to C-terminus: Putative pectinesterase/pectinesterase inhibitor 43 (701 aa).

A signal peptide spans 1-22; the sequence is MNKYVLLGVTALIMAMVICVEA. The segment at 42-195 is pectinesterase inhibitor 43; sequence MITKTTVSII…QHLTSNGLAI (154 aa). 2 stretches are compositionally biased toward low complexity: residues 221 to 256 and 263 to 275; these read GILG…VDSS and SSSE…SSNN. The tract at residues 221-351 is disordered; that stretch reads GILGSGSSRD…DPLRKLNPLN (131 aa). Asn-267 carries N-linked (GlcNAc...) asparagine glycosylation. 2 stretches are compositionally biased toward polar residues: residues 276–287 and 313–338; these read RPLDSSKNQQME and QKST…SSEN. A pectinesterase 43 region spans residues 391–688; it reads NVVVAKDGSG…FAPGNFLRGN (298 aa). Positions 467 and 497 each coordinate substrate. The active-site Proton donor; for pectinesterase activity is the Asp-520. A disulfide bridge links Cys-534 with Cys-554. Asp-541 acts as the Nucleophile; for pectinesterase activity in catalysis. 2 residues coordinate substrate: Arg-609 and Trp-611. The N-linked (GlcNAc...) asparagine glycan is linked to Asn-637.

In the N-terminal section; belongs to the PMEI family. The protein in the C-terminal section; belongs to the pectinesterase family. Expressed in flower buds.

It is found in the secreted. Its subcellular location is the cell wall. It catalyses the reaction [(1-&gt;4)-alpha-D-galacturonosyl methyl ester](n) + n H2O = [(1-&gt;4)-alpha-D-galacturonosyl](n) + n methanol + n H(+). It participates in glycan metabolism; pectin degradation; 2-dehydro-3-deoxy-D-gluconate from pectin: step 1/5. Acts in the modification of cell walls via demethylesterification of cell wall pectin. The sequence is that of Putative pectinesterase/pectinesterase inhibitor 43 (PME43) from Arabidopsis thaliana (Mouse-ear cress).